A 55-amino-acid chain; its full sequence is Preprotein translocase subunit SecG (55 aa).

At 1–29 (MAKRSGSGLQSSAGLMRYYEADKNAVHIQ) the chain is on the cytoplasmic side. The helical transmembrane segment at 30 to 49 (PKTVLIVGALAGIAVLFLSA) threads the bilayer. The Extracellular portion of the chain corresponds to 50–55 (VNGFWP).

The protein belongs to the SEC61-beta family. Component of the protein translocase complex. Heterotrimer consisting of alpha (SecY), beta (SecG) and gamma (SecE) subunits. Can form oligomers of the heterotrimer.

Its subcellular location is the cell membrane. In terms of biological role, involved in protein export. The function of the beta subunit is unknown, but it may be involved in stabilization of the trimeric complex. The protein is Preprotein translocase subunit SecG (secG) of Methanosarcina acetivorans (strain ATCC 35395 / DSM 2834 / JCM 12185 / C2A).